The sequence spans 130 residues: Small ribosomal subunit protein uS8 (130 aa).

Belongs to the universal ribosomal protein uS8 family. As to quaternary structure, part of the 30S ribosomal subunit. Contacts proteins S5 and S12.

In terms of biological role, one of the primary rRNA binding proteins, it binds directly to 16S rRNA central domain where it helps coordinate assembly of the platform of the 30S subunit. The chain is Small ribosomal subunit protein uS8 from Klebsiella pneumoniae (strain 342).